The sequence spans 385 residues: Glucans biosynthesis protein C (385 aa).

Transmembrane regions (helical) follow at residues 17–37 (AWLM…SHTW), 60–80 (MQVF…RYPL), 91–111 (VGIP…IMLQ), 137–157 (ISHL…VWIF), 173–193 (KFSM…YAVI), 212–232 (FIVM…LAFI), 245–262 (RGST…LLNQ), 274–294 (TESV…FSFG), 311–331 (ASLF…AYIT), and 338–358 (WLGF…LYEI).

The protein belongs to the acyltransferase 3 family. OpgC subfamily.

It is found in the cell membrane. It functions in the pathway glycan metabolism; osmoregulated periplasmic glucan (OPG) biosynthesis. Necessary for the succinyl substitution of periplasmic glucans. Could catalyze the transfer of succinyl residues from the cytoplasmic side of the membrane to the nascent glucan backbones on the periplasmic side of the membrane. This Escherichia coli O81 (strain ED1a) protein is Glucans biosynthesis protein C.